The sequence spans 1288 residues: 5-oxoprolinase (1288 aa).

Threonine 151 bears the Phosphothreonine mark. Residues 1248 to 1272 (PGGGGYGDPEDPAPPPGSPPQALAF) are disordered. Serine 1265 carries the phosphoserine modification.

The protein belongs to the oxoprolinase family. Homodimer.

It localises to the cytoplasm. It is found in the cytosol. The catalysed reaction is 5-oxo-L-proline + ATP + 2 H2O = L-glutamate + ADP + phosphate + H(+). Functionally, catalyzes the cleavage of 5-oxo-L-proline to form L-glutamate coupled to the hydrolysis of ATP to ADP and inorganic phosphate. This is 5-oxoprolinase from Homo sapiens (Human).